Here is a 383-residue protein sequence, read N- to C-terminus: Lipid-A-disaccharide synthase (383 aa).

It belongs to the LpxB family.

The enzyme catalyses a lipid X + a UDP-2-N,3-O-bis[(3R)-3-hydroxyacyl]-alpha-D-glucosamine = a lipid A disaccharide + UDP + H(+). It participates in bacterial outer membrane biogenesis; LPS lipid A biosynthesis. Its function is as follows. Condensation of UDP-2,3-diacylglucosamine and 2,3-diacylglucosamine-1-phosphate to form lipid A disaccharide, a precursor of lipid A, a phosphorylated glycolipid that anchors the lipopolysaccharide to the outer membrane of the cell. This chain is Lipid-A-disaccharide synthase, found in Aliivibrio salmonicida (strain LFI1238) (Vibrio salmonicida (strain LFI1238)).